Reading from the N-terminus, the 278-residue chain is 4-deoxy-L-threo-5-hexosulose-uronate ketol-isomerase (278 aa).

The Zn(2+) site is built by H196, H198, E203, and H245.

It belongs to the KduI family. Zn(2+) serves as cofactor.

It catalyses the reaction 5-dehydro-4-deoxy-D-glucuronate = 3-deoxy-D-glycero-2,5-hexodiulosonate. Its pathway is glycan metabolism; pectin degradation; 2-dehydro-3-deoxy-D-gluconate from pectin: step 4/5. Functionally, catalyzes the isomerization of 5-dehydro-4-deoxy-D-glucuronate to 3-deoxy-D-glycero-2,5-hexodiulosonate. The chain is 4-deoxy-L-threo-5-hexosulose-uronate ketol-isomerase from Pectobacterium carotovorum subsp. carotovorum (Erwinia carotovora subsp. carotovora).